A 60-amino-acid chain; its full sequence is Phycobilisome degradation protein NblA homolog 2 (60 aa).

The protein to Synechococcus PCC 7942 NblA and some, to chloroplast ycf18.

This chain is Phycobilisome degradation protein NblA homolog 2, found in Synechocystis sp. (strain ATCC 27184 / PCC 6803 / Kazusa).